Reading from the N-terminus, the 354-residue chain is UDP-N-acetylglucosamine--N-acetylmuramyl-(pentapeptide) pyrophosphoryl-undecaprenol N-acetylglucosamine transferase (354 aa).

UDP-N-acetyl-alpha-D-glucosamine-binding positions include 15–17, Asn127, Arg163, Ser191, Ile244, 263–268, and Gln288; these read TGG and ALTVSE.

This sequence belongs to the glycosyltransferase 28 family. MurG subfamily.

It localises to the cell inner membrane. The enzyme catalyses di-trans,octa-cis-undecaprenyl diphospho-N-acetyl-alpha-D-muramoyl-L-alanyl-D-glutamyl-meso-2,6-diaminopimeloyl-D-alanyl-D-alanine + UDP-N-acetyl-alpha-D-glucosamine = di-trans,octa-cis-undecaprenyl diphospho-[N-acetyl-alpha-D-glucosaminyl-(1-&gt;4)]-N-acetyl-alpha-D-muramoyl-L-alanyl-D-glutamyl-meso-2,6-diaminopimeloyl-D-alanyl-D-alanine + UDP + H(+). It functions in the pathway cell wall biogenesis; peptidoglycan biosynthesis. In terms of biological role, cell wall formation. Catalyzes the transfer of a GlcNAc subunit on undecaprenyl-pyrophosphoryl-MurNAc-pentapeptide (lipid intermediate I) to form undecaprenyl-pyrophosphoryl-MurNAc-(pentapeptide)GlcNAc (lipid intermediate II). This is UDP-N-acetylglucosamine--N-acetylmuramyl-(pentapeptide) pyrophosphoryl-undecaprenol N-acetylglucosamine transferase from Aliivibrio fischeri (strain MJ11) (Vibrio fischeri).